The following is a 2923-amino-acid chain: Cadherin EGF LAG seven-pass G-type receptor 2 (2923 aa).

The N-terminal stretch at 1-31 (MRSPATGVPLPTPPPPLLLLLLLLLPPPLLG) is a signal peptide. Topologically, residues 32-2380 (DQVGPCRSLG…GEILPLKTLT (2349 aa)) are extracellular. A disordered region spans residues 154-198 (PGLRAGERSPEESLGGRRKRNVNTAPQFQPPSYQATVPENQPAGT). A compositionally biased stretch (basic and acidic residues) spans 158-168 (AGERSPEESLG). Residues 175-196 (VNTAPQFQPPSYQATVPENQPA) are compositionally biased toward polar residues. 9 consecutive Cadherin domains span residues 182-289 (QPPS…DPVF), 290-399 (EQQE…APQF), 400-505 (SEKR…APIF), 506-610 (VSTP…NPTF), 611-712 (TQPE…RPVF), 713-815 (QSSH…APQF), 816-921 (LRDS…PPVF), 922-1023 (EQDE…PPVL), and 1028-1146 (ILFN…SPLL). Residues Asn-486, Asn-557, and Asn-701 are each glycosylated (N-linked (GlcNAc...) asparagine). 4 N-linked (GlcNAc...) asparagine glycosylation sites follow: Asn-1036, Asn-1076, Asn-1182, and Asn-1212. Positions 1228–1286 (DDNICLREPCENYMRCVSVLRFDSSAPFIASSSVLFRPIHPVGGLRCRCPPGFTGDYCE) constitute an EGF-like 1; calcium-binding domain. 9 cysteine pairs are disulfide-bonded: Cys-1232–Cys-1243, Cys-1237–Cys-1274, Cys-1276–Cys-1285, Cys-1292–Cys-1303, Cys-1297–Cys-1312, Cys-1314–Cys-1323, Cys-1332–Cys-1343, Cys-1337–Cys-1353, and Cys-1355–Cys-1365. The EGF-like 2; calcium-binding domain occupies 1288–1324 (EVDLCYSRPCGPHGRCRSREGGYTCLCRDGYTGEHCE). The EGF-like 3; calcium-binding domain occupies 1328 to 1366 (RSGRCTPGVCKNGGTCVNLLVGGFKCDCPSGDFEKPYCQ). Residues 1367–1571 (VTTRSFPAHS…IANNGTVPGC (205 aa)) form the Laminin G-like 1 domain. Asn-1501 and Asn-1565 each carry an N-linked (GlcNAc...) asparagine glycan. 4 disulfide bridges follow: Cys-1545–Cys-1571, Cys-1578–Cys-1589, Cys-1583–Cys-1598, and Cys-1600–Cys-1609. Residues 1574-1610 (KKNVCDSNTCHNGGTCVNQWDAFSCECPLGFGGKSCA) form the EGF-like 4; calcium-binding domain. Asn-1591 carries the post-translational modification (3R)-3-hydroxyasparagine. A Laminin G-like 2 domain is found at 1614–1791 (ANPQHFLGSS…GESINVEQGC (178 aa)). Asn-1741 carries an N-linked (GlcNAc...) asparagine glycan. Intrachain disulfides connect Cys-1761/Cys-1791, Cys-1797/Cys-1808, Cys-1802/Cys-1817, Cys-1819/Cys-1828, Cys-1832/Cys-1843, Cys-1837/Cys-1855, Cys-1857/Cys-1866, Cys-1887/Cys-1899, Cys-1889/Cys-1906, Cys-1908/Cys-1921, Cys-1924/Cys-1936, Cys-1926/Cys-1943, Cys-1945/Cys-1954, and Cys-1957/Cys-1969. The 36-residue stretch at 1793-1828 (LPDPCDSNPCPANSYCSNDWDSYSCSCDPGYYGDNC) folds into the EGF-like 5; calcium-binding domain. (3R)-3-hydroxyasparagine is present on Asn-1810. The N-linked (GlcNAc...) asparagine glycan is linked to Asn-1827. The region spanning 1829 to 1867 (TNVCDLNPCEHQSVCTRKPSAPHGYTCECPPNYLGPYCE) is the EGF-like 6; calcium-binding domain. The 40-residue stretch at 1883-1922 (TCGPCNCDVSKGFDPDCNKTSGECHCKENHYRPPGSPTCL) folds into the EGF-like 7; calcium-binding domain. N-linked (GlcNAc...) asparagine glycosylation occurs at Asn-1900. The Laminin EGF-like domain maps to 1924 to 1971 (CDCYPTGSLSRVCDPEDGQCPCKPGVIGRQCDRCDNPFAEVTTNGCEV). N-linked (GlcNAc...) asparagine glycosylation is found at Asn-2024, Asn-2043, and Asn-2061. Residues 2199-2369 (ETTVILPESV…AVLMDVSRRE (171 aa)) form the GAIN-B domain. The interval 2213 to 2238 (PPVVRPAGPGEAQEPEELARRQRRHP) is disordered. 2 cysteine pairs are disulfide-bonded: Cys-2319/Cys-2351 and Cys-2339/Cys-2353. Residues 2319–2369 (CVFWNHSILVSGTGGWSARGCEVVFRNESHVSCQCNHMTSFAVLMDVSRRE) are GPS. Residues Asn-2323 and Asn-2345 are each glycosylated (N-linked (GlcNAc...) asparagine). The chain crosses the membrane as a helical span at residues 2381-2401 (YVALGVTLAALLLTFFFLTLL). Topologically, residues 2402-2416 (RILRSNQHGIRRNLT) are cytoplasmic. Residues 2417–2437 (AALGLAQLVFLLGINQADLPF) traverse the membrane as a helical segment. Position 2438 (Ala-2438) is a topological domain, extracellular. The helical transmembrane segment at 2439-2459 (CTVIAILLHFLYLCTFSWALL) threads the bilayer. The Cytoplasmic portion of the chain corresponds to 2460–2480 (EALHLYRALTEVRDVNTGPMR). Residues 2481–2501 (FYYMLGWGVPAFITGLAVGLD) form a helical membrane-spanning segment. The Extracellular segment spans residues 2502-2519 (PEGYGNPDFCWLSIYDTL). Residues 2520–2540 (IWSFAGPVAFAVSMSVFLYIL) traverse the membrane as a helical segment. Residues 2541-2560 (AARASCAAQRQGFEKKGPVS) lie on the Cytoplasmic side of the membrane. The helical transmembrane segment at 2561–2581 (GLQPSFAVLLLLSATWLLALL) threads the bilayer. Topologically, residues 2582–2591 (SVNSDTLLFH) are extracellular. A helical transmembrane segment spans residues 2592–2612 (YLFATCNCIQGPFIFLSYVVL). Over 2613 to 2923 (SKEVRKALKL…SEFLFFNFLH (311 aa)) the chain is Cytoplasmic. Disordered stretches follow at residues 2688–2838 (SALN…HKGI) and 2854–2888 (LRLP…RQSL). Composition is skewed to acidic residues over residues 2718–2730 (TDSD…EDDQ) and 2742–2753 (SEEEEEEEEEEA). A compositionally biased stretch (basic and acidic residues) spans 2807–2819 (PEERLRENGDALS). Low complexity predominate over residues 2863 to 2873 (GSSRGSSASEG).

It belongs to the G-protein coupled receptor 2 family. LN-TM7 subfamily. As to quaternary structure, heterodimer of 2 chains generated by proteolytic processing; the large extracellular N-terminal fragment and the membrane-bound C-terminal fragment predominantly remain associated and non-covalently linked. Post-translationally, the iron and 2-oxoglutarate dependent 3-hydroxylation of aspartate and asparagine is (R) stereospecific within EGF domains. Autoproteolytically processed at the GPS region of the GAIN-B domain; this cleavage modulates receptor activity. Highest expression in brain and testis.

Its subcellular location is the cell membrane. In terms of biological role, receptor that may have an important role in cell/cell signaling during nervous system formation. The polypeptide is Cadherin EGF LAG seven-pass G-type receptor 2 (Homo sapiens (Human)).